Consider the following 669-residue polypeptide: Epithelial sodium channel subunit alpha (669 aa).

A disordered region spans residues 1–43; that stretch reads MEGNKLEEQDSSPPQSTPGLMKGNKREEQGLGPEPAAPQQPTA. The Cytoplasmic portion of the chain corresponds to 1–85; sequence MEGNKLEEQD…CSQHNRMKTA (85 aa). The segment covering 33–42 has biased composition (low complexity); it reads PEPAAPQQPT. Residues 86 to 106 traverse the membrane as a helical segment; sequence FWAVLWLCTFGMMYWQFGLLF. Topologically, residues 107–562 are extracellular; it reads GEYFSYPVSL…SQWSLWFGSS (456 aa). 10 cysteine pairs are disulfide-bonded: cysteine 133–cysteine 305, cysteine 229–cysteine 236, cysteine 282–cysteine 289, cysteine 394–cysteine 479, cysteine 416–cysteine 456, cysteine 416–cysteine 475, cysteine 420–cysteine 471, cysteine 429–cysteine 456, cysteine 429–cysteine 479, and cysteine 431–cysteine 445. Positions 175–243 are gating release of inhibition by proteolysis (GRIP); protease-sensitive region that is responsible for the proteolytic activation of the channel; it reads RSRRDLRGTL…SDCFYQTYSS (69 aa). A helical transmembrane segment spans residues 563–583; the sequence is VLSVVEMAELVFDLLVIMFLM. Residues 584–669 lie on the Cytoplasmic side of the membrane; it reads LLRRFRSRYW…SSSTCPLGGP (86 aa). The disordered stretch occupies residues 620–669; sequence HPMSLSLSQPGPAPSPALTAPPPAYATLGPRPSPGGSAGASSSTCPLGGP. Residues 630-643 are compositionally biased toward pro residues; it reads GPAPSPALTAPPPA. A PY motif; recruits WW domain-containing proteins and is thereby required for ubiquitination and inhibition of the channel by NEDD4 and NEDD4L motif is present at residues 640–644; the sequence is PPPAY.

This sequence belongs to the amiloride-sensitive sodium channel (TC 1.A.6) family. SCNN1A subfamily. As to quaternary structure, heterotrimer; containing an alpha/SCNN1A, a beta/SCNN1B and a gamma/SCNN1G subunit. Interacts with WWP1 (via WW domains). Interacts with WWP2 (via WW domains); inhibits the channel. Interacts with BPIFA1; the interaction is indirect via SCNN1B and inhibits the proteolytic processing of SCNN1A and SCNN1G and the activation of ENaC. Interacts with the full-length immature form of PCSK9 (pro-PCSK9); inhibits ENaC by promoting its proteasomal degradation. Post-translationally, ubiquitinated. Can be ubiquitinated at multiple sites and undergo monoubiquitination and polyubiquitination. Ubiquitination by NEDD4 or NEDD4L inhibits the ENaC channel through endocytosis, intracellular retention and degradation of its individual subunits. ENaC is activated through the proteolytic maturation of its subunits. Furin cleaves the SCNN1A subunit, which results in a stepwise increase in the open probability of the channel due to the release of an inhibitory tract. BPIFA1, which is recruited by the SCNN1B subunit, prevents the proteolytic activation of ENaC. In terms of processing, N-glycosylated. Expressed in the female reproductive tract, from the fimbrial end of the fallopian tube to the endometrium (at protein level). Expressed in kidney (at protein level). In the respiratory tract, expressed in the bronchial epithelium (at protein level). Highly expressed in lung. Detected at intermediate levels in pancreas and liver, and at low levels in heart and placenta. in skin, expressed in keratinocytes, melanocytes and Merkel cells of the epidermal sub-layers, stratum basale, stratum spinosum and stratum granulosum (at protein level). Expressed in the outer root sheath of the hair follicles (at protein level). Detected in both peripheral and central cells of the sebaceous gland (at protein level). Expressed by eccrine sweat glands (at protein level). In skin, also expressed by arrector pili muscle cells and intradermal adipocytes. Isoform 1 and isoform 2 predominate in all tissues. In terms of tissue distribution, detected in lung and heart.

It is found in the apical cell membrane. It localises to the cell projection. The protein resides in the cilium. Its subcellular location is the cytoplasmic granule. The protein localises to the cytoplasm. It is found in the cytoplasmic vesicle. It localises to the secretory vesicle. The protein resides in the acrosome. Its subcellular location is the flagellum. The enzyme catalyses Na(+)(in) = Na(+)(out). Originally identified and characterized by its inhibition by the diuretic drug amiloride. Inhibited by phenamil. Its function is as follows. This is one of the three pore-forming subunits of the heterotrimeric epithelial sodium channel (ENaC), a critical regulator of sodium balance and fluid homeostasis. ENaC operates in epithelial tissues, where it mediates the electrodiffusion of sodium ions from extracellular fluid through the apical membrane of cells, with water following osmotically. It plays a key role in maintaining sodium homeostasis through electrogenic sodium reabsorption in the kidneys. Additionally, ENaC is essential for airway surface liquid homeostasis, which is crucial for proper mucus clearance. In terms of biological role, not functional. This is Epithelial sodium channel subunit alpha from Homo sapiens (Human).